The following is a 352-amino-acid chain: Protein RecA (352 aa).

67–74 is an ATP binding site; that stretch reads GPESSGKT.

This sequence belongs to the RecA family.

It localises to the cytoplasm. Functionally, can catalyze the hydrolysis of ATP in the presence of single-stranded DNA, the ATP-dependent uptake of single-stranded DNA by duplex DNA, and the ATP-dependent hybridization of homologous single-stranded DNAs. It interacts with LexA causing its activation and leading to its autocatalytic cleavage. The chain is Protein RecA from Chlamydia trachomatis serovar L2 (strain ATCC VR-902B / DSM 19102 / 434/Bu).